The following is a 222-amino-acid chain: Noggin (222 aa).

An N-terminal signal peptide occupies residues 1–19 (MDHSQCLVTIYALMVFLGL). N-linked (GlcNAc...) asparagine glycosylation occurs at asparagine 61. Cystine bridges form between cysteine 145–cysteine 182, cysteine 168–cysteine 218, cysteine 174–cysteine 220, and cysteine 197–cysteine 205.

The protein belongs to the noggin family. In terms of assembly, homodimer.

The protein localises to the secreted. Patterns the embryo by interrupting bone morphogenetic proteins (BMP) signaling. Binds BMP-4 and BMP-2 with high affinity. Can abolish BMP-4 activity by blocking binding to cognate cell-surface receptors. Capable of inducing dorsal development in embryos. Causes dorsal mesodermal differentiation of animal cap ectoderm when coexpressed with xWNT-8 and nuclear, sequence-specific DNA-binding protein xBRA. None of these molecules causes dorsal mesoderm formation when expressed alone. This is Noggin (nog) from Xenopus laevis (African clawed frog).